The sequence spans 466 residues: MSSTGENKNQIKIKFFTNEEDESLQVADTPLYVPVTLKRFGLSEVVNHLLGNFKGEDETKAPIPFDFLIDGVLLRTSIEDYLTKNGLSNEAFLTLEYTRAILPPSFLASFNNDDWISSIDSINPTTKIVMSSQLSISQPKILSGSYDGIVRTYNMSGKVEKQYVGHSAPVKAVKWISPTRIVSAGNDRQVRLWKTSYEEIIDEDEEEIEDGKTLALLEGHKAPVVDLAVDTQTNRILSAGYDQNIGFWSTNYKEMTSIQPLEYDSNVVSSSSKKRRKMAVQDATIRRRAPLSLLQGHSEPVEGVIFDAKDSTVGYSVSQDHTIKTWDLVTSRCVDTRTTGYSLLSVLQLPQVNLIASGSSARHINLHDPRVTTTSDQTISKLVGHTNFVVGLTASPHNQNMFASSSHDGTVKVWDVRAEKSLYTITRQDGSTNAKIFDVCWDDRIGIISGGEDKKLQINKGSDIAK.

Positions 11-99 (IKIKFFTNEE…EAFLTLEYTR (89 aa)) are ubiquitin-like (UBL) domain. The tract at residues 109–466 (SFNNDDWISS…QINKGSDIAK (358 aa)) is sufficient for interaction with ERB1 and association with 66S pre-ribosomes. WD repeat units follow at residues 124–163 (PTTKIVMSSQLSISQPKILSGSYDGIVRTYNMSGKVEKQY), 165–203 (GHSAPVKAVKWISPTRIVSAGNDRQVRLWKTSYEEIIDE), 219–258 (GHKAPVVDLAVDTQTNRILSAGYDQNIGFWSTNYKEMTSI), 296–336 (GHSE…CVDT), 338–377 (TTGYSLLSVLQLPQVNLIASGSSARHINLHDPRVTTTSDQ), 384–424 (GHTN…SLYT), and 431–466 (STNAKIFDVCWDDRIGIISGGEDKKLQINKGSDIAK).

Belongs to the WD repeat WDR12/YTM1 family. In terms of assembly, component of the NOP7 complex, composed of ERB1, NOP7 and YTM1. The complex is held together by ERB1, which interacts with NOP7 via its N-terminal domain and with YTM1 via a high-affinity interaction between the seven-bladed beta-propeller domains of the 2 proteins. The NOP7 complex associates with the 66S pre-ribosome. Interacts (via UBL domain) with MDN1 (via VWFA/MIDAS domain).

The protein resides in the nucleus. It localises to the nucleolus. It is found in the nucleoplasm. In terms of biological role, component of the NOP7 complex, which is required for maturation of the 25S and 5.8S ribosomal RNAs and formation of the 60S ribosome. The protein is Ribosome biogenesis protein YTM1 of Candida albicans (strain SC5314 / ATCC MYA-2876) (Yeast).